A 496-amino-acid chain; its full sequence is Glycerol kinase (496 aa).

ADP is bound at residue Thr12. Residues Thr12, Thr13, and Ser14 each coordinate ATP. Sn-glycerol 3-phosphate is bound at residue Thr12. Arg16 contributes to the ADP binding site. Sn-glycerol 3-phosphate contacts are provided by Arg82, Glu83, and Tyr134. Glycerol contacts are provided by Arg82, Glu83, and Tyr134. At His230 the chain carries Phosphohistidine; by HPr. Asp244 contributes to the sn-glycerol 3-phosphate binding site. Residues Asp244 and Gln245 each coordinate glycerol. ADP contacts are provided by Thr266 and Gly309. Residues Thr266, Gly309, Gln313, and Gly410 each contribute to the ATP site. The ADP site is built by Gly410 and Asn414.

It belongs to the FGGY kinase family. As to quaternary structure, homotetramer and homodimer (in equilibrium). The phosphoenolpyruvate-dependent sugar phosphotransferase system (PTS), including enzyme I, and histidine-containing protein (HPr) are required for the phosphorylation, which leads to the activation of the enzyme.

The enzyme catalyses glycerol + ATP = sn-glycerol 3-phosphate + ADP + H(+). The protein operates within polyol metabolism; glycerol degradation via glycerol kinase pathway; sn-glycerol 3-phosphate from glycerol: step 1/1. Its activity is regulated as follows. Activated by phosphorylation and inhibited by fructose 1,6-bisphosphate (FBP). Its function is as follows. Key enzyme in the regulation of glycerol uptake and metabolism. Catalyzes the phosphorylation of glycerol to yield sn-glycerol 3-phosphate. This is Glycerol kinase from Geobacillus kaustophilus (strain HTA426).